Reading from the N-terminus, the 352-residue chain is Coproporphyrin III ferrochelatase (352 aa).

The Fe-coproporphyrin III site is built by S52 and Y121. Fe(2+)-binding residues include H181 and E269.

The protein belongs to the ferrochelatase family.

It localises to the cytoplasm. The catalysed reaction is Fe-coproporphyrin III + 2 H(+) = coproporphyrin III + Fe(2+). It participates in porphyrin-containing compound metabolism; protoheme biosynthesis. In terms of biological role, involved in coproporphyrin-dependent heme b biosynthesis. Catalyzes the insertion of ferrous iron into coproporphyrin III to form Fe-coproporphyrin III. This chain is Coproporphyrin III ferrochelatase, found in Nocardia farcinica (strain IFM 10152).